The primary structure comprises 297 residues: uncharacterized protein (297 aa).

This is an uncharacterized protein from Frog virus 3 (isolate Goorha) (FV-3).